We begin with the raw amino-acid sequence, 1138 residues long: Transmembrane channel-like protein 3 (1138 aa).

The span at 1 to 15 (MEAAPGTAAAAAKPA) shows a compositional bias: low complexity. Disordered stretches follow at residues 1-20 (MEAAPGTAAAAAKPAKSCKK) and 29-54 (NIYTYQEPPHSNSDEDISEEKADSQD). At 1–155 (MEAAPGTAAA…VASYFIFLRW (155 aa)) the chain is on the cytoplasmic side. The helical transmembrane segment at 156-176 (LFGINIVLTIMTGAFVVLPEL) threads the bilayer. At 177-202 (LAGAPFGSTVSKTIRQEDLKTAQDLD) the chain is on the extracellular side. A helical transmembrane segment spans residues 203 to 223 (TIWSLGGYLQYSVLFYGYYGS). At 224 to 233 (DRKIGKAGYR) the chain is on the cytoplasmic side. The helical transmembrane segment at 234–254 (LPLAYFLVGMAVFAYSFIILL) threads the bilayer. Residues 255–327 (KKMAKNSRMS…KNLAVTISLR (73 aa)) are Extracellular-facing. Asn272 carries an N-linked (GlcNAc...) asparagine glycan. A helical membrane pass occupies residues 328–348 (IIANILVLLSLTGSIYIIYFV). Residues 349–369 (VDRSQKLENNKRELTLWEKNE) are Cytoplasmic-facing. Residues 370–390 (VSVVVSLITMIAPSAFELVAA) traverse the membrane as a helical segment. The Extracellular segment spans residues 391–401 (LEMYHPRTTLR). A helical transmembrane segment spans residues 402-422 (FQLARVLVLYLGNLYSLIIAL). Topologically, residues 423–508 (LDKVNSMSVT…CWETYVGQEM (86 aa)) are cytoplasmic. Residues 509–529 (LKLSIIDMIFTVASILLIDFF) traverse the membrane as a helical segment. At 530-569 (RGLCVRYLSDCWCWDLESKFPEYGEFKIAENVLHLVYNQG) the chain is on the extracellular side. A helical membrane pass occupies residues 570-590 (MIWMGAFFSPCLPAFNVLKLI). At 591-618 (GLMYLRSWAVLTCNVPHQQVFRASRSNN) the chain is on the cytoplasmic side. A helical transmembrane segment spans residues 619–639 (FYLAMLLFMLFLCMLPTIFAI). Topologically, residues 640-676 (ARYKPSLSCGPFSGQEKIYDIVSETIQNDFPAWFNSV) are extracellular. The helical transmembrane segment at 677 to 697 (IAYISSPVVVLPALLLLFMLI) threads the bilayer. Residues 698 to 1138 (YYLQSIARSL…EPNELVCSNV (441 aa)) lie on the Cytoplasmic side of the membrane. Residues 753 to 763 (NSEGTRFQSLD) are compositionally biased toward polar residues. Disordered regions lie at residues 753–859 (NSEG…RYPS), 973–1005 (SPHPSEDEEDEEALGRHYVKRSHRPRSLSDLRP), and 1065–1095 (PKTKHMLEQSLTESDSVSIESSSDPQNSSND). Over residues 764-773 (GSDKRPDKDG) the composition is skewed to basic and acidic residues. Polar residues-rich tracts occupy residues 777-795 (SQESSVRASTPRKNGSVLN) and 804-813 (TRIQTISQTV). The segment covering 828-845 (TTPTTSASLTPAPSVSSA) has biased composition (low complexity). The segment covering 989-998 (HYVKRSHRPR) has biased composition (basic residues). Low complexity predominate over residues 1074-1095 (SLTESDSVSIESSSDPQNSSND).

It belongs to the TMC family. Expressed in a range of tissues including cerebrum, cerebellum, retina, cochlea, lung, liver and heart. Also expressed in the apical, medial and basal portions of the basillar papilla.

The protein localises to the membrane. Probable component of an ion channel. The chain is Transmembrane channel-like protein 3 from Gallus gallus (Chicken).